We begin with the raw amino-acid sequence, 174 residues long: Ribulose bisphosphate carboxylase small subunit, chloroplastic (174 aa).

The N-terminal 45 residues, 1–45 (MAPTVMASSATSVAPFQGLKSTAGLPVSRRSNASSASVSNGGRIR), are a transit peptide targeting the chloroplast.

This sequence belongs to the RuBisCO small chain family. As to quaternary structure, heterohexadecamer of 8 large and 8 small subunits.

The protein localises to the plastid. Its subcellular location is the chloroplast. Its function is as follows. RuBisCO catalyzes two reactions: the carboxylation of D-ribulose 1,5-bisphosphate, the primary event in carbon dioxide fixation, as well as the oxidative fragmentation of the pentose substrate. Both reactions occur simultaneously and in competition at the same active site. Although the small subunit is not catalytic it is essential for maximal activity. The chain is Ribulose bisphosphate carboxylase small subunit, chloroplastic from Hordeum vulgare (Barley).